The sequence spans 373 residues: Acyl-CoA dehydrogenase FadE27 (373 aa).

The FAD site is built by R251, H327, and G331.

It belongs to the acyl-CoA dehydrogenase family. As to quaternary structure, heterotetramer (dimer of heterodimers) composed of FadE26 and FadE27. It depends on FAD as a cofactor.

It catalyses the reaction (25S)-3-oxocholest-4-en-26-oyl-CoA + A = 3-oxo-cholest-4,24-dien-26-oyl-CoA + AH2. It functions in the pathway steroid metabolism; cholesterol degradation. Its activity is regulated as follows. Uncompetitively inhibited by high concentration of 3-OCS-CoA. In terms of biological role, involved in the first cycle of side chain dehydrogenation in the beta-oxidation of cholesterol catabolism. It contributes partly to the virulence by increasing the efficiency of beta-oxidation. Catalyzes the dehydrogenation of acyl-CoA ester side chains of (25S)-3-oxo-cholest-4-en-26-oyl-CoA (3-OCS-CoA) to yield (24E)-3-oxo-cholest-4,24-dien-26-oyl-CoA. Also able to dehydrogenate steroyl-CoA such as 3-oxo-chol-4-en-24-oyl-CoA (3-OCO-CoA) as well as 3-oxo-4-pregnene-20-carboxyl-CoA (3-OPC-CoA). It dehydrogenates only (25S)-OCS-CoA diastereomer. This is Acyl-CoA dehydrogenase FadE27 (fadE27) from Mycobacterium tuberculosis (strain ATCC 25618 / H37Rv).